The primary structure comprises 868 residues: Alanine--tRNA ligase (868 aa).

Histidine 555, histidine 559, cysteine 657, and histidine 661 together coordinate Zn(2+). Positions 828-847 are disordered; the sequence is SQVGGKGGGRPDMAQAGGSE.

This sequence belongs to the class-II aminoacyl-tRNA synthetase family. Zn(2+) serves as cofactor.

It is found in the cytoplasm. It carries out the reaction tRNA(Ala) + L-alanine + ATP = L-alanyl-tRNA(Ala) + AMP + diphosphate. Its function is as follows. Catalyzes the attachment of alanine to tRNA(Ala) in a two-step reaction: alanine is first activated by ATP to form Ala-AMP and then transferred to the acceptor end of tRNA(Ala). Also edits incorrectly charged Ser-tRNA(Ala) and Gly-tRNA(Ala) via its editing domain. This chain is Alanine--tRNA ligase, found in Pseudoalteromonas translucida (strain TAC 125).